The primary structure comprises 304 residues: Heme A synthase (304 aa).

Residues 1–8 (MFNKRNLK) are Cytoplasmic-facing. Residues 9–29 (WLSVLATIIMAFVQLGGALVT) traverse the membrane as a helical segment. Topologically, residues 30–67 (KTGSEDGCGSSWPLCHGALLPQNLPIDTIIELSHRAVS) are extracellular. Cysteine 37 and cysteine 44 form a disulfide bridge. The active site involves glutamate 60. Residue histidine 63 participates in heme o binding. The helical transmembrane segment at 68–88 (GLSLIVVLWLAITAWKHIGYI) threads the bilayer. Topologically, residues 89-93 (REVKP) are cytoplasmic. The chain crosses the membrane as a helical span at residues 94–114 (LAIISIAFLLVQALIGAAAVI). At 115–123 (WQQNSYVLA) the chain is on the extracellular side. The chain crosses the membrane as a helical span at residues 124–144 (LHFGISLISFSSVFVLMLIIF). Histidine 125 is a heme o binding site. Residues 145 to 163 (EVDKKYEADELYIRKPLRR) are Cytoplasmic-facing. A helical membrane pass occupies residues 164–184 (LTWIMTGIVYLTIYTGALVRH). The Extracellular portion of the chain corresponds to 185-215 (AKASLAYGGWPLPFHDIIPHTEQDWVQFAHR). Histidine 214 is a binding site for heme b. The helical transmembrane segment at 216–236 (GMAFITFFWIMITFIHAVKNY) threads the bilayer. Residues 237–244 (SENRTIRY) lie on the Cytoplasmic side of the membrane. The helical transmembrane segment at 245-265 (GYTTAFILIILQVITGALSVM) threads the bilayer. Over 266–270 (TNVNL) the chain is Extracellular. A helical transmembrane segment spans residues 271-291 (FIALLHALFITILFGMIAYFI). Histidine 276 contacts heme b. At 292 to 304 (MLMLRTIRSEKIK) the chain is on the cytoplasmic side.

This sequence belongs to the COX15/CtaA family. Type 1 subfamily. In terms of assembly, interacts with CtaB. It depends on heme b as a cofactor.

Its subcellular location is the cell membrane. It carries out the reaction Fe(II)-heme o + 2 A + H2O = Fe(II)-heme a + 2 AH2. It participates in porphyrin-containing compound metabolism; heme A biosynthesis; heme A from heme O: step 1/1. Its function is as follows. Catalyzes the conversion of heme O to heme A by two successive hydroxylations of the methyl group at C8. The first hydroxylation forms heme I, the second hydroxylation results in an unstable dihydroxymethyl group, which spontaneously dehydrates, resulting in the formyl group of heme A. The sequence is that of Heme A synthase from Staphylococcus haemolyticus (strain JCSC1435).